A 370-amino-acid chain; its full sequence is Dual-specificity RNA methyltransferase RlmN (370 aa).

The active-site Proton acceptor is the E97. Residues 103–340 (EKSRGTLCIS…CTVRRTRGDD (238 aa)) enclose the Radical SAM core domain. A disulfide bond links C110 and C345. Residues C117, C121, and C124 each coordinate [4Fe-4S] cluster. Residues 170–171 (GE), S202, 224–226 (SLH), and N302 contribute to the S-adenosyl-L-methionine site. C345 acts as the S-methylcysteine intermediate in catalysis.

It belongs to the radical SAM superfamily. RlmN family. Requires [4Fe-4S] cluster as cofactor.

The protein localises to the cytoplasm. It carries out the reaction adenosine(2503) in 23S rRNA + 2 reduced [2Fe-2S]-[ferredoxin] + 2 S-adenosyl-L-methionine = 2-methyladenosine(2503) in 23S rRNA + 5'-deoxyadenosine + L-methionine + 2 oxidized [2Fe-2S]-[ferredoxin] + S-adenosyl-L-homocysteine. The enzyme catalyses adenosine(37) in tRNA + 2 reduced [2Fe-2S]-[ferredoxin] + 2 S-adenosyl-L-methionine = 2-methyladenosine(37) in tRNA + 5'-deoxyadenosine + L-methionine + 2 oxidized [2Fe-2S]-[ferredoxin] + S-adenosyl-L-homocysteine. In terms of biological role, specifically methylates position 2 of adenine 2503 in 23S rRNA and position 2 of adenine 37 in tRNAs. m2A2503 modification seems to play a crucial role in the proofreading step occurring at the peptidyl transferase center and thus would serve to optimize ribosomal fidelity. This chain is Dual-specificity RNA methyltransferase RlmN, found in Hydrogenovibrio crunogenus (strain DSM 25203 / XCL-2) (Thiomicrospira crunogena).